The sequence spans 223 residues: UPF0441 protein YgiB (223 aa).

Over residues 178–195 the composition is skewed to low complexity; that stretch reads TVPKTAMAPKPATTTTVT. Positions 178-223 are disordered; it reads TVPKTAMAPKPATTTTVTRGGFGESVAKQSTMQRSAAGTSTRSMGG. Residues 204 to 223 are compositionally biased toward polar residues; the sequence is AKQSTMQRSAAGTSTRSMGG.

It belongs to the UPF0441 family.

This chain is UPF0441 protein YgiB, found in Salmonella enteritidis PT4 (strain P125109).